The chain runs to 87 residues: Small ribosomal subunit protein eS21 (87 aa).

This sequence belongs to the eukaryotic ribosomal protein eS21 family. Component of the small ribosomal subunit. Mature ribosomes consist of a small (40S) and a large (60S) subunit. The 40S subunit contains about 33 different proteins and 1 molecule of RNA (18S). The 60S subunit contains about 49 different proteins and 3 molecules of RNA (25S, 5.8S and 5S).

It is found in the cytoplasm. In terms of biological role, required for the processing of the 20S rRNA-precursor to mature 18S rRNA in a late step of the maturation of 40S ribosomal subunits. Has a physiological role leading to 18S rRNA stability. In Candida albicans (Yeast), this protein is Small ribosomal subunit protein eS21 (RPS21).